The following is a 664-amino-acid chain: PAN2-PAN3 deadenylation complex subunit PAN3 (664 aa).

2 disordered regions span residues 1 to 27 (MATT…GREN) and 54 to 134 (DPHK…PGTM). Residues 27-56 (NAKDTLCRNVTIYGRCRYEDKGCAFNHDPH) form a C3H1-type zinc finger. The span at 74–96 (DSPSFTPSILSSNGSSPTSQSAT) shows a compositional bias: polar residues. Residues 115 to 131 (PRSISSRSNSSTPTTRP) are compositionally biased toward low complexity. A pseudokinase domain region spans residues 265–525 (QTLPNTQLPA…NIDIFITGIS (261 aa)). Residues arginine 317, 366–373 (DYHPLSKT), and 425–426 (SK) contribute to the ATP site. Residues 526-564 (STLMSTFDSALHLDDQLTSDLSRELENGRLVRLMTKLNF) adopt a coiled-coil conformation. Residues 565 to 664 (VNERPEYEHD…LKPSASRRLH (100 aa)) form a knob domain region.

The protein belongs to the protein kinase superfamily. PAN3 family. Homodimer. Forms a heterotrimer with a catalytic subunit pan2 to form the poly(A)-nuclease (PAN) deadenylation complex. Interacts (via PAM-2 motif) with poly(A)-binding protein pab1 (via PABC domain), conferring substrate specificity of the enzyme complex.

Its subcellular location is the cytoplasm. In terms of biological role, regulatory subunit of the poly(A)-nuclease (PAN) deadenylation complex, one of two cytoplasmic mRNA deadenylases involved in mRNA turnover. PAN specifically shortens poly(A) tails of RNA and the activity is stimulated by poly(A)-binding protein pab1. PAN deadenylation is followed by rapid degradation of the shortened mRNA tails by the CCR4-NOT complex. Deadenylated mRNAs are then degraded by two alternative mechanisms, namely exosome-mediated 3'-5' exonucleolytic degradation, or deadenylation-dependent mRNA decaping and subsequent 5'-3' exonucleolytic degradation by xrn1. May also be involved in post-transcriptional maturation of mRNA poly(A) tails. pan3 acts as a positive regulator for PAN activity, recruiting the catalytic subunit pan2 to mRNA via its interaction with RNA and with pab1. This Aspergillus niger (strain ATCC MYA-4892 / CBS 513.88 / FGSC A1513) protein is PAN2-PAN3 deadenylation complex subunit PAN3.